The chain runs to 236 residues: Small ribosomal subunit protein uS2c (236 aa).

The protein belongs to the universal ribosomal protein uS2 family.

The protein localises to the plastid. The protein resides in the chloroplast. The sequence is that of Small ribosomal subunit protein uS2c (rps2) from Illicium oligandrum (Star anise).